Reading from the N-terminus, the 272-residue chain is MHKPQSFFHLHLISDATGETLLAAGRAAAAQYKNARAIEHIYPLVRTEKQLEKVFASIDEEPGIVLYTIVDQKLARQVDERCQAMGLPCVSVLEPVLAVFQSYLGTPAGRRVGAQHVLDAEYFRRIDALNFTMEHDDGQLPHNVEEADIVLVGVSRTSKTPTSIYLANRGIKTANVPIVLDAPLPEPLLNAKRPLVVGLIASAERISQVRQNRLLGASHVDFDAYVDRAEIARELAYARQLCNRHNWPVIDVTRRSIEETAAAILALRGKSW.

Residue 153 to 160 participates in ADP binding; it reads GVSRTSKT.

It belongs to the pyruvate, phosphate/water dikinase regulatory protein family. PDRP subfamily.

It catalyses the reaction N(tele)-phospho-L-histidyl/L-threonyl-[pyruvate, phosphate dikinase] + ADP = N(tele)-phospho-L-histidyl/O-phospho-L-threonyl-[pyruvate, phosphate dikinase] + AMP + H(+). It carries out the reaction N(tele)-phospho-L-histidyl/O-phospho-L-threonyl-[pyruvate, phosphate dikinase] + phosphate + H(+) = N(tele)-phospho-L-histidyl/L-threonyl-[pyruvate, phosphate dikinase] + diphosphate. Functionally, bifunctional serine/threonine kinase and phosphorylase involved in the regulation of the pyruvate, phosphate dikinase (PPDK) by catalyzing its phosphorylation/dephosphorylation. The protein is Putative pyruvate, phosphate dikinase regulatory protein of Chelativorans sp. (strain BNC1).